We begin with the raw amino-acid sequence, 228 residues long: Ion-translocating oxidoreductase complex subunit E (228 aa).

The next 5 helical transmembrane spans lie at 24-44 (LLGL…LGLG), 73-93 (VFVL…NAFF), 95-115 (ELYL…AIIG), 130-150 (LADG…LGAL), and 184-204 (GFLL…LIAL).

It belongs to the NqrDE/RnfAE family. As to quaternary structure, the complex is composed of six subunits: RnfA, RnfB, RnfC, RnfD, RnfE and RnfG.

The protein resides in the cell inner membrane. In terms of biological role, part of a membrane-bound complex that couples electron transfer with translocation of ions across the membrane. This Thioalkalivibrio sulfidiphilus (strain HL-EbGR7) protein is Ion-translocating oxidoreductase complex subunit E.